Consider the following 669-residue polypeptide: Coagulation factor XIII B chain (669 aa).

An N-terminal signal peptide occupies residues 1–21 (MMTLRHLPFILLLILSGELYA). 10 consecutive Sushi domains span residues 25 to 89 (QCDF…PRCY), 90 to 149 (KKCL…SCRK), 152 to 211 (ETCL…QCNK), 212 to 270 (LMCS…ICEG), 273 to 330 (NRCP…KCIE), 335 to 392 (VACE…ECVE), 395 to 453 (ENCK…VCLE), 454 to 517 (PCTI…PMCI), 523 to 581 (GMCA…SCLE), and 582 to 648 (PCTL…PKCT). Intrachain disulfides connect Cys-26–Cys-77, Cys-60–Cys-88, Cys-92–Cys-136, Cys-119–Cys-147, Cys-154–Cys-198, Cys-181–Cys-209, Cys-214–Cys-256, Cys-242–Cys-268, Cys-275–Cys-317, Cys-303–Cys-328, Cys-337–Cys-379, Cys-365–Cys-390, Cys-397–Cys-440, Cys-426–Cys-451, Cys-455–Cys-506, Cys-487–Cys-516, Cys-525–Cys-568, Cys-554–Cys-579, Cys-583–Cys-637, and Cys-617–Cys-647. An N-linked (GlcNAc...) asparagine glycan is attached at Asn-163. N-linked (GlcNAc...) asparagine glycosylation is present at Asn-546.

Tetramer of two A chains (F13A1) and two B (F13B) chains. As to expression, predominantly expressed in liver and kidney.

The protein localises to the secreted. The B chain of factor XIII is not catalytically active, but is thought to stabilize the A subunits and regulate the rate of transglutaminase formation by thrombin. This chain is Coagulation factor XIII B chain (F13b), found in Mus musculus (Mouse).